Reading from the N-terminus, the 2344-residue chain is Pecanex-like protein 1 (2344 aa).

A run of 2 helical transmembrane segments spans residues 33 to 53 (ALHLYLWLFLLGLPFTLYMAL) and 57 to 77 (MIIVAVYCPVVAAVFIILKMV). Disordered stretches follow at residues 101 to 163 (QRAK…GSSR), 271 to 290 (SHSYRKEHRPRGVPRTSSSA), 306 to 692 (QQQR…TRAR), and 749 to 837 (VTRS…VQSR). Residues 143–163 (SSRNSYAGLDPSNQIGSGSSR) show a composition bias toward polar residues. A compositionally biased stretch (basic residues) spans 272–282 (HSYRKEHRPRG). Residues 328 to 343 (RESSAGKSCPPAQSQP) are compositionally biased toward polar residues. Positions 372–390 (SLRSLSTRSSGSTESYCSG) are enriched in low complexity. A compositionally biased stretch (polar residues) spans 396–406 (NSTLSSYKSEQ). Composition is skewed to basic and acidic residues over residues 416–458 (LSEH…DKTA), 508–522 (RPPEQSAESKEEQSE), and 531–547 (RVCKDDGGKQKEGDVRP). Over residues 557–572 (TSAHKPGRRRTGKKRA) the composition is skewed to basic residues. Positions 616 to 638 (SIHSAHQFSSDSSSSATSHSCQS) are enriched in low complexity. Residues 749–758 (VTRSRNSLPS) show a composition bias toward polar residues. Low complexity-rich tracts occupy residues 770-781 (AATGAAQASEEA) and 817-835 (LSLQDGQQGQQSTAQVKVQ). A run of 3 helical transmembrane segments spans residues 1010 to 1030 (ILAVVLAILVAFLGSILLIQG), 1035 to 1055 (IWVFQFCLVIASCQYSLLKSV), and 1069 to 1089 (IIAYSRPVYFCLCCGLIWLLD). Asn-1094 is a glycosylation site (N-linked (GlcNAc...) asparagine). A helical membrane pass occupies residues 1119–1139 (LVIVFTLCFPIVFFIGLLPQV). Asn-1158 carries an N-linked (GlcNAc...) asparagine glycan. The next 4 membrane-spanning stretches (helical) occupy residues 1163 to 1183 (LLAALYSFLCSIVAVALLYGL), 1196 to 1216 (HVPVLFSVFCGLLVAVSYHLS), 1269 to 1289 (LVVCVIIGVLYFAIHVSTVFT), and 1297 to 1317 (YVLYALVGVVGLVTHYVLPQV). N-linked (GlcNAc...) asparagine glycosylation is found at Asn-1582, Asn-1723, Asn-1985, and Asn-2075. The tract at residues 2051-2123 (EDSDTGGGTS…SSLVRQSPAR (73 aa)) is disordered. 2 stretches are compositionally biased toward polar residues: residues 2061 to 2081 (CPGNSAVTASDPHNNVSQGST) and 2095 to 2118 (PTTSYPPTLGTSHSAHSVQSSLVR). N-linked (GlcNAc...) asparagine glycans are attached at residues Asn-2231, Asn-2237, and Asn-2263.

Belongs to the pecanex family.

The protein resides in the membrane. This is Pecanex-like protein 1 from Mus musculus (Mouse).